We begin with the raw amino-acid sequence, 275 residues long: NH(3)-dependent NAD(+) synthetase (275 aa).

G46–S53 contributes to the ATP binding site. Mg(2+) is bound at residue D52. R140 contacts deamido-NAD(+). Residue T160 participates in ATP binding. E165 contributes to the Mg(2+) binding site. 2 residues coordinate deamido-NAD(+): K173 and D180. Residues K189 and T211 each contribute to the ATP site. A deamido-NAD(+)-binding site is contributed by H260–K261.

Belongs to the NAD synthetase family. As to quaternary structure, homodimer.

It catalyses the reaction deamido-NAD(+) + NH4(+) + ATP = AMP + diphosphate + NAD(+) + H(+). Its pathway is cofactor biosynthesis; NAD(+) biosynthesis; NAD(+) from deamido-NAD(+) (ammonia route): step 1/1. In terms of biological role, catalyzes the ATP-dependent amidation of deamido-NAD to form NAD. Uses ammonia as a nitrogen source. This Cronobacter sakazakii (strain ATCC BAA-894) (Enterobacter sakazakii) protein is NH(3)-dependent NAD(+) synthetase.